Here is a 275-residue protein sequence, read N- to C-terminus: Vitamin B12-binding protein (275 aa).

Positions 1-19 (MMNKICLYLPLFFSSLTMA) are cleaved as a signal peptide. The 248-residue stretch at 25–272 (RVISLAPHAT…EVCEHFESVK (248 aa)) folds into the Fe/B12 periplasmic-binding domain. Cysteine 185 and cysteine 265 are oxidised to a cystine.

This sequence belongs to the BtuF family. As to quaternary structure, the complex is composed of two ATP-binding proteins (BtuD), two transmembrane proteins (BtuC) and a solute-binding protein (BtuF).

The protein localises to the periplasm. In terms of biological role, part of the ABC transporter complex BtuCDF involved in vitamin B12 import. Binds vitamin B12 and delivers it to the periplasmic surface of BtuC. The protein is Vitamin B12-binding protein of Vibrio parahaemolyticus serotype O3:K6 (strain RIMD 2210633).